Consider the following 168-residue polypeptide: ATP synthase subunit d, mitochondrial (168 aa).

Belongs to the ATPase d subunit family. F-type ATPases have 2 components, CF(1) - the catalytic core - and CF(0) - the membrane proton channel. CF(0) seems to have nine subunits: a, b, c, d, e, f, g, F6 and 8 (or A6L).

The protein resides in the mitochondrion. It localises to the mitochondrion inner membrane. Functionally, mitochondrial membrane ATP synthase (F(1)F(0) ATP synthase or Complex V) produces ATP from ADP in the presence of a proton gradient across the membrane which is generated by electron transport complexes of the respiratory chain. F-type ATPases consist of two structural domains, F(1) - containing the extramembraneous catalytic core, and F(0) - containing the membrane proton channel, linked together by a central stalk and a peripheral stalk. During catalysis, ATP synthesis in the catalytic domain of F(1) is coupled via a rotary mechanism of the central stalk subunits to proton translocation. Part of the complex F(0) domain and the peripheric stalk, which acts as a stator to hold the catalytic alpha(3)beta(3) subcomplex and subunit a/ATP6 static relative to the rotary elements. The polypeptide is ATP synthase subunit d, mitochondrial (Arabidopsis thaliana (Mouse-ear cress)).